A 257-amino-acid polypeptide reads, in one-letter code: Pyridoxine 5'-phosphate synthase (257 aa).

N12 lines the 3-amino-2-oxopropyl phosphate pocket. 14-15 (DH) provides a ligand contact to 1-deoxy-D-xylulose 5-phosphate. R23 serves as a coordination point for 3-amino-2-oxopropyl phosphate. The active-site Proton acceptor is H48. Positions 50 and 55 each coordinate 1-deoxy-D-xylulose 5-phosphate. Catalysis depends on E75, which acts as the Proton acceptor. T105 lines the 1-deoxy-D-xylulose 5-phosphate pocket. The active-site Proton donor is H199. 3-amino-2-oxopropyl phosphate contacts are provided by residues G200 and 221 to 222 (GH).

The protein belongs to the PNP synthase family. In terms of assembly, homooctamer; tetramer of dimers.

The protein resides in the cytoplasm. The enzyme catalyses 3-amino-2-oxopropyl phosphate + 1-deoxy-D-xylulose 5-phosphate = pyridoxine 5'-phosphate + phosphate + 2 H2O + H(+). The protein operates within cofactor biosynthesis; pyridoxine 5'-phosphate biosynthesis; pyridoxine 5'-phosphate from D-erythrose 4-phosphate: step 5/5. Catalyzes the complicated ring closure reaction between the two acyclic compounds 1-deoxy-D-xylulose-5-phosphate (DXP) and 3-amino-2-oxopropyl phosphate (1-amino-acetone-3-phosphate or AAP) to form pyridoxine 5'-phosphate (PNP) and inorganic phosphate. This is Pyridoxine 5'-phosphate synthase from Xanthobacter autotrophicus (strain ATCC BAA-1158 / Py2).